A 1285-amino-acid polypeptide reads, in one-letter code: Tat-binding homolog 7 (1285 aa).

Disordered stretches follow at residues 1–95 (MARS…LTYR), 121–173 (MSDD…RTRR), 224–243 (GREE…EKEQ), and 258–359 (QEDE…ERGR). Acidic residues-rich tracts occupy residues 226–237 (EEEEEGDEEEAE) and 258–270 (QEDE…ESSE). The segment covering 311–325 (NRHHRNRNTSNRRRR) has biased composition (basic residues). Residue 446-453 (GPPGTGKT) participates in ATP binding. Residues 928–1032 (ALQRQMRMFF…NTFRDAIDDM (105 aa)) form the Bromo domain. A disordered region spans residues 1100–1196 (EKLKEKLGIS…PTIQSSSSQE (97 aa)). Residues 1136–1149 (KLNKKKKDQKRNKK) show a composition bias toward basic residues. Positions 1155-1175 (PDGDDTEETEEAVAENNVDAD) are enriched in acidic residues.

This sequence belongs to the AAA ATPase family.

In terms of biological role, thought to form a complex that enhances transcription from repetitive DNA sequences by modulating chromatin structure. The protein is Tat-binding homolog 7 of Caenorhabditis briggsae.